Reading from the N-terminus, the 688-residue chain is Glycine--tRNA ligase beta subunit (688 aa).

This sequence belongs to the class-II aminoacyl-tRNA synthetase family. In terms of assembly, tetramer of two alpha and two beta subunits.

It is found in the cytoplasm. It carries out the reaction tRNA(Gly) + glycine + ATP = glycyl-tRNA(Gly) + AMP + diphosphate. This chain is Glycine--tRNA ligase beta subunit, found in Listeria monocytogenes serotype 4a (strain HCC23).